A 276-amino-acid polypeptide reads, in one-letter code: Large ribosomal subunit protein uL2 (276 aa).

Disordered regions lie at residues 30–52 (VKGL…TTSR) and 224–257 (VMNP…KGYK). The span at 41-52 (GGRNNHGRTTSR) shows a compositional bias: polar residues.

Belongs to the universal ribosomal protein uL2 family. In terms of assembly, part of the 50S ribosomal subunit. Forms a bridge to the 30S subunit in the 70S ribosome.

In terms of biological role, one of the primary rRNA binding proteins. Required for association of the 30S and 50S subunits to form the 70S ribosome, for tRNA binding and peptide bond formation. It has been suggested to have peptidyltransferase activity; this is somewhat controversial. Makes several contacts with the 16S rRNA in the 70S ribosome. The polypeptide is Large ribosomal subunit protein uL2 (Gluconacetobacter diazotrophicus (strain ATCC 49037 / DSM 5601 / CCUG 37298 / CIP 103539 / LMG 7603 / PAl5)).